We begin with the raw amino-acid sequence, 529 residues long: MSEIWEDAIKSNAWPFVEAKKILDSLNGKTPEKGYLLFETGYGPSGLPHIGTFGENARIVMVQKAFEQLSDIPTKLICFSDDMDGLRKVPSNIPHPEMVAGYMDMPLTSIPDPFGECESYGHYMNAKLRSFLDKFGFKYEFYSSTNCYKAGMFDEMLIRVLEQYDKIMELMLPTFREERKATYSPFMPVCLKTGKVLQVPIEKWDAKVGTVTYKDEAGNYIEVPVTGGHCKLQWKPDFGMRWAALKVDYEMYGKDHLANARLYSEICRILGGKPPVQLCYELFLDENGEKISKSKGNSISVDDWLKYAPVESMALFMYQNPTRAKRLFFDVIPKNVDEYITFNQKYHLEEDRAKRFANPVYHIHHGNVPKIETFGITYVLLLNLTSVCNPSDKTVLWGFISKYEPKATPNTSPYLDHLAEFAIRYYNDFIKAHKSYLAPSEKHNVILRDILDMLSDISDQTEAEGIQKAIYDIGMRAGYENLRDYFKDLYQILLGQSEGPRLGTFIKLYGVQETKKLVAGKLTMLSRKK.

The 'HIGH' region motif lies at 44–52; it reads PSGLPHIGT. Residues 290 to 294 carry the 'KMSKS' region motif; the sequence is KISKS. Lys293 contributes to the ATP binding site.

This sequence belongs to the class-I aminoacyl-tRNA synthetase family.

It localises to the cytoplasm. The enzyme catalyses tRNA(Lys) + L-lysine + ATP = L-lysyl-tRNA(Lys) + AMP + diphosphate. This chain is Lysine--tRNA ligase, found in Rickettsia akari (strain Hartford).